Consider the following 158-residue polypeptide: Regulator of sigma D (158 aa).

This sequence belongs to the Rsd/AlgQ family. Interacts with RpoD.

It is found in the cytoplasm. Binds RpoD and negatively regulates RpoD-mediated transcription activation by preventing the interaction between the primary sigma factor RpoD with the catalytic core of the RNA polymerase and with promoter DNA. May be involved in replacement of the RNA polymerase sigma subunit from RpoD to RpoS during the transition from exponential growth to the stationary phase. The sequence is that of Regulator of sigma D from Escherichia coli (strain SMS-3-5 / SECEC).